The chain runs to 513 residues: NAD(P)H-quinone oxidoreductase subunit 2, chloroplastic (513 aa).

Transmembrane regions (helical) follow at residues 11 to 31, 38 to 58, 78 to 98, 112 to 132, 133 to 153, 167 to 187, 219 to 239, 256 to 276, 290 to 310, 318 to 338, 348 to 368, 389 to 409, 422 to 442, and 478 to 498; these read NLIT…ILMI, SVWL…ILLF, GFTI…IPLS, FLIL…ANDL, VTIF…AGQA, LLMG…LYGL, FGAL…GFKI, PTPV…ALAT, WHIV…LIAA, MLAY…LVGN, YLLI…IFGL, AFAL…AGFF, HLYL…YYYL, and LGLT…NPLI.

Belongs to the complex I subunit 2 family. In terms of assembly, NDH is composed of at least 16 different subunits, 5 of which are encoded in the nucleus.

It is found in the plastid. It localises to the chloroplast thylakoid membrane. It carries out the reaction a plastoquinone + NADH + (n+1) H(+)(in) = a plastoquinol + NAD(+) + n H(+)(out). It catalyses the reaction a plastoquinone + NADPH + (n+1) H(+)(in) = a plastoquinol + NADP(+) + n H(+)(out). In terms of biological role, NDH shuttles electrons from NAD(P)H:plastoquinone, via FMN and iron-sulfur (Fe-S) centers, to quinones in the photosynthetic chain and possibly in a chloroplast respiratory chain. The immediate electron acceptor for the enzyme in this species is believed to be plastoquinone. Couples the redox reaction to proton translocation, and thus conserves the redox energy in a proton gradient. The sequence is that of NAD(P)H-quinone oxidoreductase subunit 2, chloroplastic from Staurastrum punctulatum (Green alga).